Reading from the N-terminus, the 117-residue chain is uncharacterized protein (117 aa).

This is an uncharacterized protein from Methanocaldococcus jannaschii (strain ATCC 43067 / DSM 2661 / JAL-1 / JCM 10045 / NBRC 100440) (Methanococcus jannaschii).